The sequence spans 356 residues: S-adenosylmethionine:tRNA ribosyltransferase-isomerase (356 aa).

Belongs to the QueA family. In terms of assembly, monomer.

It is found in the cytoplasm. It carries out the reaction 7-aminomethyl-7-carbaguanosine(34) in tRNA + S-adenosyl-L-methionine = epoxyqueuosine(34) in tRNA + adenine + L-methionine + 2 H(+). Its pathway is tRNA modification; tRNA-queuosine biosynthesis. In terms of biological role, transfers and isomerizes the ribose moiety from AdoMet to the 7-aminomethyl group of 7-deazaguanine (preQ1-tRNA) to give epoxyqueuosine (oQ-tRNA). This Xanthomonas campestris pv. campestris (strain B100) protein is S-adenosylmethionine:tRNA ribosyltransferase-isomerase.